The chain runs to 1002 residues: Glutamate receptor ionotropic, NMDA 3B (1002 aa).

The N-terminal stretch at 1–24 (MESVRTLWLSVALALAVGSRVVRG) is a signal peptide. Residues 25–574 (HPQPCRVPTR…PIGAFMWPLH (550 aa)) lie on the Extracellular side of the membrane. N-linked (GlcNAc...) asparagine glycans are attached at residues asparagine 69, asparagine 212, asparagine 344, asparagine 451, and asparagine 465. Intrachain disulfides connect cysteine 439–cysteine 475 and cysteine 445–cysteine 476. Glycine is bound by residues serine 531, serine 533, and arginine 538. D-serine contacts are provided by serine 533 and arginine 538. The chain crosses the membrane as a helical span at residues 575 to 594 (WSMWVGVFAALHLTALFLTL). Residues 595 to 615 (YEWRSPYGLTPRGRNRGTVFS) lie on the Cytoplasmic side of the membrane. The discontinuously helical intramembrane region spans 616–627 (YSSALNLCYAIL). The Cytoplasmic segment spans residues 628 to 641 (FGRTVSSKTPKCPT). A helical membrane pass occupies residues 642 to 661 (GRFLMNLWAIFCLLVLSSYT). Residues 662–832 (ANLAAVMVGD…TLQMGVYHFS (171 aa)) lie on the Extracellular side of the membrane. Serine 701 lines the glycine pocket. Residues serine 701, alanine 702, and aspartate 745 each contribute to the D-serine site. Aspartate 745 is a glycine binding site. Residue asparagine 786 is glycosylated (N-linked (GlcNAc...) asparagine). A helical transmembrane segment spans residues 833 to 848 (GLFVLLCLGLGSALLT). Residues 849-1002 (SLGEHVFYRL…RLLHAAPAES (154 aa)) are Cytoplasmic-facing. The interval 882–910 (ALNTGPPEGQQERAEQERSGPKDELPATD) is disordered. Positions 891–906 (QQERAEQERSGPKDEL) are enriched in basic and acidic residues. Residues 944-985 (LCSNGPGLQAELRELELRIEAARERLRSALLRRGELRALLGD) adopt a coiled-coil conformation. The interval 951-984 (LQAELRELELRIEAARERLRSALLRRGELRALLG) is involved in the trafficking and surface expression of NMDARs.

This sequence belongs to the glutamate-gated ion channel (TC 1.A.10.1) family. NR3B/GRIN3B subfamily. As to quaternary structure, forms heterotetrameric channels that contain at least two GluN1 subunits and at least a combination of one GluN2 and one GluN3 subunits (in vitro). Forms heterotetrameric channels composed of two GluN1/zeta subunits (GRIN1), and two identical GluN3 subunits (GRIN3A or GRIN3B) (in vitro). Does not form functional homomeric channels. As to expression, expressed in the hippocampus, the corpus callosum, in the facial and trigeminal nuclei of the brainstem and the ventral horn of the spinal cord.

Its subcellular location is the cell membrane. The protein resides in the postsynaptic cell membrane. It catalyses the reaction Ca(2+)(in) = Ca(2+)(out). The enzyme catalyses Na(+)(in) = Na(+)(out). Excitatory glycine receptors are inhibited by D-serine at a concentrion of 100uM. Its function is as follows. Component of a non-conventional N-methyl-D-aspartate (NMDA) receptors (NMDARs) that function as heterotetrameric, ligand-gated cation channels with low calcium permeability and low voltage-dependent block by Mg(2+). Forms glutamatergic receptor complexes with GluN1 and GluN2 subunits which are activated by glycine binding to the GluN1 and GluN3 subunits and L-glutamate binding to GluN2 subunits. Forms excitatory glycinergic receptor complexes with GluN1 alone which are activated by glycine binding to the GluN1 and GluN3 subunits. GluN3B subunit also binds D-serine and, in the absence of glycine, activates glycinergic receptor complexes, but with lower efficacy than glycine. Each GluN3 subunit confers differential attributes to channel properties, including activation, deactivation and desensitization kinetics, pH sensitivity, Ca2(+) permeability, and binding to allosteric modulators. This Rattus norvegicus (Rat) protein is Glutamate receptor ionotropic, NMDA 3B.